Consider the following 122-residue polypeptide: Thioredoxin H-type (122 aa).

Positions 2-118 (AAEEGVVIAC…IVKHVGATAA (117 aa)) constitute a Thioredoxin domain. An intrachain disulfide couples Cys40 to Cys43.

Its subcellular location is the cytoplasm. In terms of biological role, participates in various redox reactions through the reversible oxidation of the active center dithiol to a disulfide. The H form is known to activate a number of cytosolic enzymes. In Oryza sativa subsp. indica (Rice), this protein is Thioredoxin H-type (TRXH).